Consider the following 220-residue polypeptide: Fructose-6-phosphate aldolase (220 aa).

K85 acts as the Schiff-base intermediate with substrate in catalysis.

The protein belongs to the transaldolase family. Type 3A subfamily. In terms of assembly, homodecamer.

It localises to the cytoplasm. The catalysed reaction is beta-D-fructose 6-phosphate = dihydroxyacetone + D-glyceraldehyde 3-phosphate. Catalyzes the reversible formation of fructose 6-phosphate from dihydroxyacetone and D-glyceraldehyde 3-phosphate via an aldolization reaction. The sequence is that of Fructose-6-phosphate aldolase from Salmonella arizonae (strain ATCC BAA-731 / CDC346-86 / RSK2980).